We begin with the raw amino-acid sequence, 301 residues long: NADH-cytochrome b5 reductase 3 (301 aa).

A lipid anchor (N-myristoyl glycine) is attached at G2. The 113-residue stretch at 40–152 (DIKYPLRLID…RGPNGLLVYQ (113 aa)) folds into the FAD-binding FR-type domain. The residue at position 42 (K42) is an N6-acetyllysine. Phosphotyrosine is present on Y43. K50 is modified (N6-acetyllysine). FAD is bound by residues R92, P93, Y94, V109, K111, and F114. An N6-acetyllysine modification is found at K120. K126, M127, S128, and T185 together coordinate FAD.

This sequence belongs to the flavoprotein pyridine nucleotide cytochrome reductase family. Component of a complex composed of cytochrome b5, NADH-cytochrome b5 reductase (CYB5R3) and MTARC2. Interacts with MTLN; the interaction is required to maintain cellular lipid composition and leads to stimulation of mitochondrial respiratory complex I activity. Requires FAD as cofactor.

Its subcellular location is the endoplasmic reticulum membrane. It localises to the mitochondrion outer membrane. The enzyme catalyses 2 Fe(III)-[cytochrome b5] + NADH = 2 Fe(II)-[cytochrome b5] + NAD(+) + H(+). Catalyzes the reduction of two molecules of cytochrome b5 using NADH as the electron donor. This is NADH-cytochrome b5 reductase 3 (CYB5R3) from Bos taurus (Bovine).